Here is a 64-residue protein sequence, read N- to C-terminus: Large ribosomal subunit protein bL35 (64 aa).

The segment at 1-28 (MPKVKTKSGAKKRFKLTGSGKIKRKSAY) is disordered.

This sequence belongs to the bacterial ribosomal protein bL35 family.

This chain is Large ribosomal subunit protein bL35, found in Cytophaga hutchinsonii (strain ATCC 33406 / DSM 1761 / CIP 103989 / NBRC 15051 / NCIMB 9469 / D465).